The chain runs to 135 residues: Probable transcription factor At2g20613 (135 aa).

Residues 1–104 (MSHKRFNPLT…KRGGGGGEEA (104 aa)) are disordered. Residues 28 to 41 (DSSSDEETDSDSDS) are compositionally biased toward acidic residues. Basic and acidic residues predominate over residues 62-80 (KSVKISEKSVAKRSRETHE).

This sequence belongs to the GeBP family.

This chain is Probable transcription factor At2g20613, found in Arabidopsis thaliana (Mouse-ear cress).